The sequence spans 397 residues: Protein Mx1 (397 aa).

The protein belongs to the TRAFAC class dynamin-like GTPase superfamily. Dynamin/Fzo/YdjA family.

The polypeptide is Protein Mx1 (Mx1) (Mus musculus (Mouse)).